Here is a 194-residue protein sequence, read N- to C-terminus: Imidazoleglycerol-phosphate dehydratase (194 aa).

This sequence belongs to the imidazoleglycerol-phosphate dehydratase family.

It is found in the cytoplasm. It carries out the reaction D-erythro-1-(imidazol-4-yl)glycerol 3-phosphate = 3-(imidazol-4-yl)-2-oxopropyl phosphate + H2O. It participates in amino-acid biosynthesis; L-histidine biosynthesis; L-histidine from 5-phospho-alpha-D-ribose 1-diphosphate: step 6/9. The sequence is that of Imidazoleglycerol-phosphate dehydratase from Oceanobacillus iheyensis (strain DSM 14371 / CIP 107618 / JCM 11309 / KCTC 3954 / HTE831).